The sequence spans 366 residues: NADP-dependent isopropanol dehydrogenase (366 aa).

Positions 43, 65, 66, and 156 each coordinate Zn(2+). Residues 181–184, 204–206, Tyr-224, 271–273, and Lys-346 contribute to the NADP(+) site; these read IGPV, GSR, and VNY.

The protein belongs to the zinc-containing alcohol dehydrogenase family. Homodimer. Requires Zn(2+) as cofactor.

The protein localises to the cytoplasm. The catalysed reaction is propan-2-ol + NADP(+) = acetone + NADPH + H(+). Alcohol dehydrogenase with a preference for medium chain secondary alcohols, such as 2-butanol and isopropanol. Has very low activity with primary alcohols, such as ethanol. Under physiological conditions, the enzyme reduces aldehydes and 2-ketones to produce secondary alcohols. Is also active with acetaldehyde and propionaldehyde. This Entamoeba histolytica (strain ATCC 30459 / HM-1:IMSS / ABRM) protein is NADP-dependent isopropanol dehydrogenase.